The chain runs to 434 residues: Maltoporin (434 aa).

A signal peptide spans 1 to 25 (MKMKAKWLPIAAAVTAALASQAAFA).

This sequence belongs to the porin LamB (TC 1.B.3) family. As to quaternary structure, homotrimer formed of three 18-stranded antiparallel beta-barrels, containing three independent channels.

Its subcellular location is the cell outer membrane. The enzyme catalyses beta-maltose(in) = beta-maltose(out). Its function is as follows. Involved in the transport of maltose and maltodextrins. The chain is Maltoporin from Aeromonas hydrophila.